Reading from the N-terminus, the 47-residue chain is Large ribosomal subunit protein bL33 (47 aa).

The protein belongs to the bacterial ribosomal protein bL33 family.

The sequence is that of Large ribosomal subunit protein bL33 from Staphylococcus xylosus.